An 841-amino-acid chain; its full sequence is Alpha-glucuronidase A (841 aa).

An N-terminal signal peptide occupies residues 1–20 (MRGSNLFQLTLALLLSLVAA). N-linked (GlcNAc...) asparagine glycosylation is found at Asn51, Asn76, Asn149, Asn222, Asn279, Asn310, Asn343, Asn450, Asn465, Asn527, Asn576, Asn682, Asn723, and Asn732.

It belongs to the glycosyl hydrolase 67 family.

It is found in the secreted. The catalysed reaction is an alpha-D-glucuronoside + H2O = D-glucuronate + an alcohol. Functionally, alpha-glucuronidase involved in the hydrolysis of xylan, a major structural heterogeneous polysaccharide found in plant biomass representing the second most abundant polysaccharide in the biosphere, after cellulose. Releases 4-O-methylglucuronic acid from xylan. The polypeptide is Alpha-glucuronidase A (aguA) (Aspergillus tubingensis).